The primary structure comprises 429 residues: 3-phosphoshikimate 1-carboxyvinyltransferase (429 aa).

3-phosphoshikimate is bound by residues Lys-23, Ser-24, and Arg-28. Lys-23 contacts phosphoenolpyruvate. Phosphoenolpyruvate-binding residues include Gly-95 and Arg-123. 3-phosphoshikimate is bound by residues Ser-168, Gln-170, Asp-316, and Lys-343. Position 170 (Gln-170) interacts with phosphoenolpyruvate. Asp-316 (proton acceptor) is an active-site residue. Phosphoenolpyruvate-binding residues include Arg-347 and Arg-389.

Belongs to the EPSP synthase family. In terms of assembly, monomer.

It localises to the cytoplasm. The catalysed reaction is 3-phosphoshikimate + phosphoenolpyruvate = 5-O-(1-carboxyvinyl)-3-phosphoshikimate + phosphate. Its pathway is metabolic intermediate biosynthesis; chorismate biosynthesis; chorismate from D-erythrose 4-phosphate and phosphoenolpyruvate: step 6/7. Catalyzes the transfer of the enolpyruvyl moiety of phosphoenolpyruvate (PEP) to the 5-hydroxyl of shikimate-3-phosphate (S3P) to produce enolpyruvyl shikimate-3-phosphate and inorganic phosphate. The protein is 3-phosphoshikimate 1-carboxyvinyltransferase of Bacillus cereus (strain G9842).